The chain runs to 163 residues: ATP synthase subunit b (163 aa).

Residues 9–29 (GLLIAQLINVVFVVWLLTTFL) form a helical membrane-spanning segment.

This sequence belongs to the ATPase B chain family. F-type ATPases have 2 components, F(1) - the catalytic core - and F(0) - the membrane proton channel. F(1) has five subunits: alpha(3), beta(3), gamma(1), delta(1), epsilon(1). F(0) has four main subunits: a(1), b(2) and c(10-14). The alpha and beta chains form an alternating ring which encloses part of the gamma chain. F(1) is attached to F(0) by a central stalk formed by the gamma and epsilon chains, while a peripheral stalk is formed by the delta and b chains.

The protein resides in the cell membrane. Functionally, f(1)F(0) ATP synthase produces ATP from ADP in the presence of a proton or sodium gradient. F-type ATPases consist of two structural domains, F(1) containing the extramembraneous catalytic core and F(0) containing the membrane proton channel, linked together by a central stalk and a peripheral stalk. During catalysis, ATP synthesis in the catalytic domain of F(1) is coupled via a rotary mechanism of the central stalk subunits to proton translocation. Its function is as follows. Component of the F(0) channel, it forms part of the peripheral stalk, linking F(1) to F(0). The polypeptide is ATP synthase subunit b (Roseiflexus castenholzii (strain DSM 13941 / HLO8)).